We begin with the raw amino-acid sequence, 217 residues long: Pyrophosphatase PpaX (217 aa).

Asp11 functions as the Nucleophile in the catalytic mechanism.

Belongs to the HAD-like hydrolase superfamily. PpaX family. Requires Mg(2+) as cofactor.

It catalyses the reaction diphosphate + H2O = 2 phosphate + H(+). In terms of biological role, hydrolyzes pyrophosphate formed during P-Ser-HPr dephosphorylation by HPrK/P. Might play a role in controlling the intracellular pyrophosphate pool. This chain is Pyrophosphatase PpaX, found in Listeria monocytogenes serotype 4b (strain CLIP80459).